Reading from the N-terminus, the 995-residue chain is MYRRATSGVRSASARLSSSLSRIASSETASVSAPSASSLRNQTNRSKSFSSALRSFRVCSASTRWSHGGSWGSPASLRAQARNSTPVMEKFERKYATMASEHSYKDILTSLPKPGGGEYGKYYSLPALNDPRIDKLPFSVRILLESAIRNCDNYQVTKDDVEKILDWENTSTKQVEIAFKPARVILQDFTGVPVLVDLASMRDAVKNLGSDPSKINPLVPVDLVVDHSIQVDFARSEDAAQKNLELEFKRNKERFTFLKWGSTAFQNMLVVPPGSGIVHQVNLEYLGRVVFNSKGFLYPDSVVGTDSHTTMIDGLGVAGWGVGGIEAEAAMLGQPMSMVLPGVVGFKLDGKLKEGVTATDLVLTVTQILRKHGVVGKFVEFYGEGMSELSLADRATIANMSPEYGATMGFFPVDHVTLEYLKLTGRSDETVSMIESYLRANNMFVDYNEPQQERAYTSYLQLDLGHVEPCISGPKRPHDRVPLKDMKADWHACLDNPVGFKGFAVPKEKQEEVVKFSYNGQPAEIKHGSVVIAAITSCTNTSNPSVMIGAALVAKKASDLGLKVKPWVKTSLAPGSRVVEKYLDRSGLRESLTKQGFEIVGYGCTTCIGNSGNLDPEVASAIEGTDIIPAAVLSGNRNFEGRVHPQTRANYLASPPLVVAYALAGTVDIDFEKEPIGTRSDGKSVYLRDVWPSNEEVAQVVQYSVLPSMFKSSYETITEGNPLWNELSAPSSTLYSWDPNSTYIHEPPYFKNMTANPPGPREVKDAYCLLNFGDSVTTDHISPAGNIQKTSPAAKFLMDRGVISEDFNSYGSRRGNDEVMARGTFANIRIVNKLLKGEVGPNTVHIPTGEKLSVFDAASKYKTAEQDTIILAGAEYGSGSSRDWAAKGPLLLGVKAVIAKSFERIHRSNLAGMGIIPLCFKAGEDAETLGLTGHERYTVHLPTKVSDIRPGQDVTVTTDSGKSFVCTLRFDTEVELAYYDHGGILPYVIRSLSAK.

The N-terminal 83 residues, 1–83 (MYRRATSGVR…PASLRAQARN (83 aa)), are a transit peptide targeting the mitochondrion. Substrate-binding positions include Gln-187 and 306–308 (DSH). Residues Cys-538, Cys-604, and Cys-607 each contribute to the [4Fe-4S] cluster site. Residues Arg-637, Arg-642, Arg-800, and 881–882 (SR) each bind substrate.

This sequence belongs to the aconitase/IPM isomerase family. Monomer. [4Fe-4S] cluster is required as a cofactor. In terms of tissue distribution, mostly expressed in roots, leaves and flowers, also present in stems, and, at low levels, in seeds.

The protein resides in the mitochondrion. It carries out the reaction citrate = D-threo-isocitrate. It functions in the pathway carbohydrate metabolism; tricarboxylic acid cycle; isocitrate from oxaloacetate: step 2/2. Catalyzes the isomerization of citrate to isocitrate via cis-aconitate. Contributes to oxidative stress tolerance. Involved in acetate assimilation. The protein is Aconitate hydratase 2, mitochondrial of Arabidopsis thaliana (Mouse-ear cress).